The primary structure comprises 450 residues: Succinate-semialdehyde dehydrogenase (450 aa).

Residue 119-120 coordinates NADP(+); the sequence is WN. Arg128 is a substrate binding site. Residues 143 to 146 and 197 to 198 each bind NADP(+); these read KPAK and GS. Glu219 acts as the Proton acceptor in catalysis. An NADP(+)-binding site is contributed by Leu220. 2 residues coordinate substrate: Arg247 and Cys253. The active-site Nucleophile is the Cys253. Glu350 contacts NADP(+). Residue Ser410 coordinates substrate.

It belongs to the aldehyde dehydrogenase family. As to quaternary structure, homodimer.

The enzyme catalyses succinate semialdehyde + NAD(+) + H2O = succinate + NADH + 2 H(+). It carries out the reaction succinate semialdehyde + NADP(+) + H2O = succinate + NADPH + 2 H(+). Its pathway is alkaloid degradation; nicotine degradation. In terms of biological role, catalyzes the NAD(P)(+)-dependent oxidation of succinate semialdehyde to succinate, which may enter the citric acid cycle. Is involved in the catabolism of 4-methylaminobutanoate produced from nicotine. Acts preferentially with NADP(+) as cosubstrate but can also use NAD(+). To a lesser extent, is active also towards butyraldehyde (8.5% of the activity observed with succinate semialdehyde) and propionaldehyde (1.6% of the activity observed with succinate semialdehyde) as substrates. This Paenarthrobacter nicotinovorans (Arthrobacter nicotinovorans) protein is Succinate-semialdehyde dehydrogenase (sad).